The chain runs to 86 residues: Small ribosomal subunit protein eS27 (86 aa).

The C4-type zinc finger occupies 39 to 61 (CQGCFNITTVFSHSQTVVVCPGC).

This sequence belongs to the eukaryotic ribosomal protein eS27 family. It depends on Zn(2+) as a cofactor.

The protein is Small ribosomal subunit protein eS27 (RPS27) of Hordeum vulgare (Barley).